We begin with the raw amino-acid sequence, 426 residues long: Glutamyl-tRNA reductase (426 aa).

Substrate-binding positions include 52–55 (TCNR), Ser-110, 115–117 (EYE), and Gln-121. Cys-53 acts as the Nucleophile in catalysis. Residue 190–195 (GAGEMG) participates in NADP(+) binding.

Belongs to the glutamyl-tRNA reductase family. As to quaternary structure, homodimer.

The catalysed reaction is (S)-4-amino-5-oxopentanoate + tRNA(Glu) + NADP(+) = L-glutamyl-tRNA(Glu) + NADPH + H(+). It participates in porphyrin-containing compound metabolism; protoporphyrin-IX biosynthesis; 5-aminolevulinate from L-glutamyl-tRNA(Glu): step 1/2. Functionally, catalyzes the NADPH-dependent reduction of glutamyl-tRNA(Glu) to glutamate 1-semialdehyde (GSA). The sequence is that of Glutamyl-tRNA reductase from Saccharolobus islandicus (strain Y.N.15.51 / Yellowstone #2) (Sulfolobus islandicus).